The primary structure comprises 174 residues: Urease accessory protein UreE (174 aa).

Residues 146–174 (NGAYATGGHAHDHDGEPEHVHGPGCQHAH) form a disordered region. The span at 154–166 (HAHDHDGEPEHVH) shows a compositional bias: basic and acidic residues.

Belongs to the UreE family.

It is found in the cytoplasm. Involved in urease metallocenter assembly. Binds nickel. Probably functions as a nickel donor during metallocenter assembly. In Albidiferax ferrireducens (strain ATCC BAA-621 / DSM 15236 / T118) (Rhodoferax ferrireducens), this protein is Urease accessory protein UreE.